Reading from the N-terminus, the 379-residue chain is F-box protein At1g67340 (379 aa).

The F-box domain maps to 41 to 92 (ADLLDSIPDDLVISILCKLGSTSRCPADFINVLLTCKRLKGLAMNPIVLSRL). Histidine 304, cysteine 307, cysteine 320, cysteine 323, cysteine 329, cysteine 333, histidine 342, and cysteine 346 together coordinate Zn(2+). The segment at 304–346 (HAGCGRPETRKHEFRRCSVCGVVNYCSRACQALDWKLRHKMDC) adopts an MYND-type; atypical zinc-finger fold. The tract at residues 358 to 379 (GGEGNVQIDGNGNGDNVLLPMS) is disordered.

Part of a SCF (ASK-cullin-F-box) protein ligase complex. Interacts with SKP1A/ASK1, SKP1B/ASK2, ASK4, ASK11 and ASK13.

The protein localises to the nucleus. Its pathway is protein modification; protein ubiquitination. In terms of biological role, component of SCF(ASK-cullin-F-box) E3 ubiquitin ligase complexes, which may mediate the ubiquitination and subsequent proteasomal degradation of target proteins. The chain is F-box protein At1g67340 from Arabidopsis thaliana (Mouse-ear cress).